Consider the following 205-residue polypeptide: High frequency lysogenization protein HflD homolog (205 aa).

The protein belongs to the HflD family.

The protein localises to the cytoplasm. Its subcellular location is the cell inner membrane. The chain is High frequency lysogenization protein HflD homolog from Haemophilus influenzae (strain PittEE).